The sequence spans 118 residues: Large ribosomal subunit protein eL22 (118 aa).

The protein belongs to the eukaryotic ribosomal protein eL22 family.

This chain is Large ribosomal subunit protein eL22 (RPL22), found in Tetrahymena thermophila (strain SB210).